Reading from the N-terminus, the 430-residue chain is Protein arginine methyltransferase NDUFAF7, mitochondrial (430 aa).

Residues 1-31 (MSGLARLRKTAFLMVSASANCRIQRYQSSRT) constitute a mitochondrion transit peptide.

It belongs to the NDUFAF7 family.

The protein localises to the mitochondrion. The catalysed reaction is L-arginyl-[protein] + 2 S-adenosyl-L-methionine = N(omega),N(omega)'-dimethyl-L-arginyl-[protein] + 2 S-adenosyl-L-homocysteine + 2 H(+). Arginine methyltransferase involved in the assembly or stability of mitochondrial NADH:ubiquinone oxidoreductase complex (complex I). Acts by mediating symmetric dimethylation of 'Arg-118' of ndufs2 after it assembles into the complex I, stabilizing the early intermediate complex. This Xenopus tropicalis (Western clawed frog) protein is Protein arginine methyltransferase NDUFAF7, mitochondrial.